The sequence spans 372 residues: tRNA-specific 2-thiouridylase MnmA (372 aa).

Residues 16-23 (GMSGGVDS) and Met42 contribute to the ATP site. An interaction with target base in tRNA region spans residues 102-104 (NPD). The active-site Nucleophile is the Cys107. A disulfide bridge links Cys107 with Cys205. Gly132 is an ATP binding site. An interaction with tRNA region spans residues 155 to 157 (KDQ). The Cysteine persulfide intermediate role is filled by Cys205. The interaction with tRNA stretch occupies residues 317 to 318 (RY).

Belongs to the MnmA/TRMU family.

It localises to the cytoplasm. The enzyme catalyses S-sulfanyl-L-cysteinyl-[protein] + uridine(34) in tRNA + AH2 + ATP = 2-thiouridine(34) in tRNA + L-cysteinyl-[protein] + A + AMP + diphosphate + H(+). Functionally, catalyzes the 2-thiolation of uridine at the wobble position (U34) of tRNA, leading to the formation of s(2)U34. The protein is tRNA-specific 2-thiouridylase MnmA of Shewanella sp. (strain ANA-3).